The chain runs to 519 residues: Laccase-2 (519 aa).

The first 20 residues, Met-1–Ala-20, serve as a signal peptide directing secretion. Plastocyanin-like domains follow at residues Ile-22–Tyr-147 and Val-159–Tyr-301. Residue Asn-74 is glycosylated (N-linked (GlcNAc...) asparagine). The Cu cation site is built by His-84, His-86, His-129, and His-131. Intrachain disulfides connect Cys-105–Cys-508 and Cys-137–Cys-225. 6 N-linked (GlcNAc...) asparagine glycosylation sites follow: Asn-161, Asn-228, Asn-237, Asn-271, Asn-353, and Asn-361. Positions Thr-368–Asp-490 constitute a Plastocyanin-like 3 domain. Positions 415, 418, 420, 472, 473, 474, and 478 each coordinate Cu cation.

Belongs to the multicopper oxidase family. In terms of assembly, homodimer. The cofactor is Cu cation.

It localises to the secreted. The enzyme catalyses 4 hydroquinone + O2 = 4 benzosemiquinone + 2 H2O. Functionally, lignin degradation and detoxification of lignin-derived products. The polypeptide is Laccase-2 (Trametes villosa (White-rot fungus)).